Consider the following 121-residue polypeptide: Large ribosomal subunit protein bL12 (121 aa).

The protein belongs to the bacterial ribosomal protein bL12 family. In terms of assembly, homodimer. Part of the ribosomal stalk of the 50S ribosomal subunit. Forms a multimeric L10(L12)X complex, where L10 forms an elongated spine to which 2 to 4 L12 dimers bind in a sequential fashion. Binds GTP-bound translation factors.

Forms part of the ribosomal stalk which helps the ribosome interact with GTP-bound translation factors. Is thus essential for accurate translation. In Pseudomonas fluorescens (strain Pf0-1), this protein is Large ribosomal subunit protein bL12.